The following is a 358-amino-acid chain: Valine dehydrogenase (358 aa).

Lysine 88 is a catalytic residue. NAD(+) is bound at residue 188–194 (GVGKVGH).

Belongs to the Glu/Leu/Phe/Val dehydrogenases family. As to quaternary structure, homodimer.

Its subcellular location is the cytoplasm. The catalysed reaction is L-valine + NAD(+) + H2O = 3-methyl-2-oxobutanoate + NH4(+) + NADH + H(+). It functions in the pathway amino-acid degradation; L-valine degradation. Oxidative deamination of branched-chain amino acids. The catabolism of valine is the major source of fatty acid precursors for macrolide biosynthesis and a vital source of antibiotic precursors. The protein is Valine dehydrogenase (vdh) of Streptomyces virginiae (Streptomyces cinnamonensis).